The following is a 283-amino-acid chain: Urease accessory protein UreD (283 aa).

This sequence belongs to the UreD family. As to quaternary structure, ureD, UreF and UreG form a complex that acts as a GTP-hydrolysis-dependent molecular chaperone, activating the urease apoprotein by helping to assemble the nickel containing metallocenter of UreC. The UreE protein probably delivers the nickel.

The protein localises to the cytoplasm. Its function is as follows. Required for maturation of urease via the functional incorporation of the urease nickel metallocenter. This is Urease accessory protein UreD from Acaryochloris marina (strain MBIC 11017).